The primary structure comprises 387 residues: Yellow-related salivary protein ASP2 (387 aa).

The signal sequence occupies residues 1 to 18 (MKIFLCLIVVVSLQGVLA).

It belongs to the major royal jelly protein family. Female salivary gland (at protein level).

Its subcellular location is the secreted. In terms of biological role, probably modulates blood feeding of sand flies on vertebrate species by binding and sequestering different mediators involved in the host response. Binds biogenic amines. Binds octopamine with high affinity. Binds serotonin and dopamine with medium affinity. Poorly binds histamine. Does not bind noradrenaline and adrenaline. The chain is Yellow-related salivary protein ASP2 from Phlebotomus orientalis (Phlebotomine sand fly).